The chain runs to 253 residues: UPF0174 protein jhp_1494 (253 aa).

Belongs to the UPF0174 family.

The chain is UPF0174 protein jhp_1494 from Helicobacter pylori (strain J99 / ATCC 700824) (Campylobacter pylori J99).